Here is a 239-residue protein sequence, read N- to C-terminus: Demethylmenaquinone methyltransferase (239 aa).

S-adenosyl-L-methionine-binding positions include Thr-68, Asp-86, and 111–112 (NG).

The protein belongs to the class I-like SAM-binding methyltransferase superfamily. MenG/UbiE family.

The enzyme catalyses a 2-demethylmenaquinol + S-adenosyl-L-methionine = a menaquinol + S-adenosyl-L-homocysteine + H(+). Its pathway is quinol/quinone metabolism; menaquinone biosynthesis; menaquinol from 1,4-dihydroxy-2-naphthoate: step 2/2. Functionally, methyltransferase required for the conversion of demethylmenaquinol (DMKH2) to menaquinol (MKH2). The chain is Demethylmenaquinone methyltransferase from Tropheryma whipplei (strain TW08/27) (Whipple's bacillus).